The primary structure comprises 1688 residues: Voltage-dependent L-type calcium channel subunit alpha-1S (1688 aa).

Residues 1-24 (MDAMGSAAEEGTQKKKRRPLVPPP) are disordered. Topologically, residues 1-51 (MDAMGSAAEEGTQKKKRRPLVPPPPRPPRALFCLGLQNPFRKFCINIVEWK) are cytoplasmic. Residues 38 to 335 (NPFRKFCINI…LVLGVLSGEF (298 aa)) form an I repeat. Residues 52 to 70 (PFEMIILLTIFANCVALAI) form a helical membrane-spanning segment. Residues 71-88 (FLPMPEDDTNSTNSVLEK) are Extracellular-facing. The N-linked (GlcNAc...) asparagine glycan is linked to Asn80. Residues 89–108 (VEYIFLFIFTIESFLKIVAY) traverse the membrane as a helical segment. Residues 109-120 (GFILHTDAYLRN) lie on the Cytoplasmic side of the membrane. Residues 121–139 (GWNILDFTIVSVGVFSVLL) traverse the membrane as a helical segment. At 140–158 (EQISKLQGLPAPGKSSGFN) the chain is on the extracellular side. A helical membrane pass occupies residues 159-177 (VKALRAFRVLRPLRLVSGV). Residues 178-196 (PSLQVVLNSIIKAMIPLLH) lie on the Cytoplasmic side of the membrane. The chain crosses the membrane as a helical span at residues 197 to 216 (IALLVLFMIIIYAIVGLELF). The Extracellular segment spans residues 217–307 (SGKMHKTCYF…WVNDAIGNEW (91 aa)). N-linked (GlcNAc...) asparagine glycosylation is present at Asn255. Glu290 contacts Ca(2+). The helical transmembrane segment at 308–332 (PWIYFVSLILLGSFFVLNLVLGVLS) threads the bilayer. The Cytoplasmic segment spans residues 333 to 431 (GEFTKEREKA…RKSRDLVKSR (99 aa)). The segment at 355–372 (QAMDEDLRGYLDWITHAE) is binding to the beta subunit. One copy of the II repeat lies at 417-663 (HRLLRRKSRD…VFLAIAVDNL (247 aa)). A helical transmembrane segment spans residues 432 to 450 (FFYWLVIIIILLNTVIIAT). The Extracellular segment spans residues 451–465 (EHHHQPDSLTKAQDI). A helical transmembrane segment spans residues 466-485 (ANEVLLALFTMEMIVKIYAL). Residues 486–493 (GFQSYFMS) are Cytoplasmic-facing. Residues 494–512 (LFNRFDSFVVCTGLLEVML) traverse the membrane as a helical segment. Topologically, residues 513 to 522 (VASDIMSPLG) are extracellular. The chain crosses the membrane as a helical span at residues 523-541 (ISVLRCIRLLRIFKITRYW). Over 542–560 (TSLNNLVASLLNSVRSIAS) the chain is Cytoplasmic. A helical membrane pass occupies residues 561–580 (LLLLLFLFMIIFALLGMQMF). Topologically, residues 581–635 (GGKFDFEDLEVRRSTFDTFPQALITVFQILTGEDWTAVMYNGIMAYGGPTYSGMS) are extracellular. Ca(2+) is bound at residue Glu613. Residues 636 to 660 (VCIYFIILFVCGNYILLNVFLAIAV) form a helical membrane-spanning segment. The Cytoplasmic portion of the chain corresponds to 661–797 (DNLAEAENLT…VLCHRIINAT (137 aa)). 2 disordered regions span residues 672-696 (AQKA…TEEE) and 729-755 (EIKD…ISPR). A compositionally biased stretch (acidic residues) spans 740–749 (PGDDEEEEPE). One copy of the III repeat lies at 784–1066 (NKIRVLCHRI…IFVGFVIVTF (283 aa)). The helical transmembrane segment at 798–816 (TFTNFILLFILLSSISLAA) threads the bilayer. Residues 817–832 (EDPIQPESFRNKVLSK) lie on the Extracellular side of the membrane. The helical transmembrane segment at 833–852 (LDIVFTVIFTTEIVLKMTAY) threads the bilayer. The Cytoplasmic segment spans residues 853–864 (GAFLHKGSFCRN). Residues 865–883 (SFNILDLSVVGVSLISMGI) traverse the membrane as a helical segment. At 884–890 (ESSAISV) the chain is on the extracellular side. The helical transmembrane segment at 891 to 909 (VKILRVLRVLRPLRAINRA) threads the bilayer. Residues 910–928 (KGLKHVVQCLFVAIKTIGN) are Cytoplasmic-facing. Residues 929-948 (IVLVTTLLQFMFSCIGVQLF) traverse the membrane as a helical segment. Topologically, residues 949-1038 (KGKFYSCTDT…MGPIYNYRIE (90 aa)) are extracellular. The tract at residues 986–1075 (RVWSHSDFHF…FQEQGEQEYK (90 aa)) is dihydropyridine binding. Glu1012 is a binding site for Ca(2+). Residues 1039–1063 (IAVFFIVYIILIAFFMMNIFVGFVI) form a helical membrane-spanning segment. Over 1064–1116 (VTFQEQGEQEYKDCELDKNQRQCVQYALKARPLRRYIPKNPHQYKIWYVVTSS) the chain is Cytoplasmic. The IV repeat unit spans residues 1103-1371 (NPHQYKIWYV…LFVAVIMDNF (269 aa)). Residues 1117 to 1135 (YFEYLMFFLITLNTISLGM) traverse the membrane as a helical segment. The Extracellular segment spans residues 1136 to 1150 (QHYGQTAEFSYMSDI). The helical transmembrane segment at 1151-1170 (LNVAFTGIFTVEMFLKLAAF) threads the bilayer. Residues 1171–1178 (KAKGYFGD) lie on the Cytoplasmic side of the membrane. A helical membrane pass occupies residues 1179-1197 (PWNVFDFLIVIGSVIDVIL). The Extracellular portion of the chain corresponds to 1198–1218 (SEIDTPGIPATPGAEESSRIS). A helical transmembrane segment spans residues 1219-1237 (ITFFRLFRVLRLVKLLSRG). At 1238 to 1256 (EGVRTLLWTFIKSFQALPY) the chain is on the cytoplasmic side. A helical transmembrane segment spans residues 1257 to 1276 (VALLIVMLFFIYAVIGMQVF). Residues 1277–1343 (GKIALVDGTH…GEEYTCGTSF (67 aa)) lie on the Extracellular side of the membrane. Residues 1324-1390 (LCDPMSDFQP…LGPHHLDEFK (67 aa)) form a dihydropyridine binding region. Residues 1336–1379 (EYTCGTSFAYFYFISFYMLCAFLIINLFVAVIMDNFDYLTRDWS) are phenylalkylamine binding. The chain crosses the membrane as a helical span at residues 1344–1368 (AYFYFISFYMLCAFLIINLFVAVIM). Residues 1369-1688 (DNFDYLTRDW…TNSSISQATN (320 aa)) lie on the Cytoplasmic side of the membrane. Disordered stretches follow at residues 1635-1664 (PEPV…RLTT) and 1669-1688 (RVQQ…QATN). Residues 1678-1688 (DTNSSISQATN) are compositionally biased toward polar residues.

Belongs to the calcium channel alpha-1 subunit (TC 1.A.1.11) family. As to quaternary structure, multisubunit complex consisting of alpha-1, alpha-2, beta and delta subunits in a 1:1:1:1 ratio. The channel activity is directed by the pore-forming and voltage-sensitive alpha-1 subunit. In many cases, this subunit is sufficient to generate voltage-sensitive calcium channel activity. The auxiliary subunits beta and alpha-2/delta linked by a disulfide bridge regulate the channel activity. An additional gamma subunit is present only in skeletal muscle L-type channel. In terms of processing, phosphorylation by PKA stimulates the calcium channel function. Skeletal muscle specific.

The protein localises to the membrane. In terms of biological role, voltage-sensitive calcium channels (VSCC) mediate the entry of calcium ions into excitable cells and are also involved in a variety of calcium-dependent processes, including muscle contraction, gene expression, cell motility, cell division and cell death. The isoform alpha-1S gives rise to L-type calcium currents. Long-lasting (L-type) calcium channels belong to the 'high-voltage activated' (HVA) group. They are blocked by dihydropyridines (DHP), phenylalkylamines, and by benzothiazepines. Calcium channels containing the alpha-1S subunit play an important role in excitation-contraction coupling in skele|tal muscle. This chain is Voltage-dependent L-type calcium channel subunit alpha-1S, found in Aquarana catesbeiana (American bullfrog).